A 676-amino-acid chain; its full sequence is MAPPAAAPELGSCCICLDAITGAARALPCLHAFCLACIRRWLEGRPTCPLCKAPVQSLIHSVASDECFEEIPVGGGPGADGALEPDAAVIWGEDYDAGPIDLTAADGEASGAGGEAGAADGSEAGGGAGGAEEAGEARGAGAGRAAGAAGGRAGRGADAAQEFIDRVARGPRLPLLPNTPEHGPGAPYLRRVVEWVEGALVGSFAVTARELAAMTDYVMAMLAECGFDDDGLADAMEPLIGEDDAPAFVRSLLFVAARCVTVGPSHLIPQQSAPPGGRGVVFLDTSDSDSEGSEDDSWSESEESSSGLSTSDLTAIDDTETEPETDAEVESRRTRGASGAARARRPAERQYVSTRGRQTPAVQPAPRSLARRPCGRAAAVSAPPSSRSRGGRRDPRLPAAPRAAPAAQARACSPEPREEGRGAGLGVAAGETAGWGAGSEEGRGERRARLLGEAGPPRVQARRRRRTELDRAPTPAPAPAPAPAPISTVIDLTANAPARPADPAPAAAPGPASAGAQIGTPAAAAAVTAAAAAPSVARSSAPSPAVTAAATSTAAAISTRAPTPSPAGRAPAADPRRAGAPALAGAARAEVGRNGNPGRERRPASAMARGDLDPGPESSAQKRRRTEMEVAAWVRESLLGTPRRSSAALAPQPGGRQGPSLAGLLGRCSGGSAWRQ.

An RING-type zinc finger spans residues 13–52; that stretch reads CCICLDAITGAARALPCLHAFCLACIRRWLEGRPTCPLCK. Disordered stretches follow at residues 101-153, 266-517, and 555-676; these read DLTA…GGRA, HLIP…AGAQ, and AAIS…AWRQ. The segment covering 123–153 has biased composition (gly residues); it reads EAGGGAGGAEEAGEARGAGAGRAAGAAGGRA. The segment covering 286–303 has biased composition (acidic residues); the sequence is SDSDSEGSEDDSWSESEE. The span at 304–314 shows a compositional bias: low complexity; it reads SSSGLSTSDLT. Over residues 315–328 the composition is skewed to acidic residues; it reads AIDDTETEPETDAE. Positions 351–361 are enriched in polar residues; that stretch reads YVSTRGRQTPA. Low complexity-rich tracts occupy residues 375 to 388 and 397 to 411; these read GRAA…SSRS and LPAA…QARA. Positions 422–439 are enriched in gly residues; the sequence is GAGLGVAAGETAGWGAGS. Residues 440 to 450 are compositionally biased toward basic and acidic residues; sequence EEGRGERRARL. The segment covering 474–484 has biased composition (pro residues); sequence TPAPAPAPAPA. Low complexity predominate over residues 555–597; it reads AAISTRAPTPSPAGRAPAADPRRAGAPALAGAARAEVGRNGNP.

It belongs to the simplexviruses ICp0 family. Post-translationally, auto-ubiquitinated. In terms of processing, transactivation activity is possibly regulated through phosphorylation by casein kinase II.

The catalysed reaction is S-ubiquitinyl-[E2 ubiquitin-conjugating enzyme]-L-cysteine + [acceptor protein]-L-lysine = [E2 ubiquitin-conjugating enzyme]-L-cysteine + N(6)-ubiquitinyl-[acceptor protein]-L-lysine.. Its function is as follows. Evades nuclear antiviral defenses triggered by dsDNA viruses. Acts during the initial stages of lytic infection and the reactivation of latent viral genome. Prevents the antiviral effect of nuclear bodies by degrading host PML and SP100. This Bovine herpesvirus 1.1 (strain Cooper) (BoHV-1) protein is E3 ubiquitin-protein ligase ICP0 (BICP0).